The chain runs to 429 residues: Glutamate-1-semialdehyde 2,1-aminomutase 2 (429 aa).

N6-(pyridoxal phosphate)lysine is present on lysine 268.

The protein belongs to the class-III pyridoxal-phosphate-dependent aminotransferase family. HemL subfamily. Homodimer. Pyridoxal 5'-phosphate is required as a cofactor.

It is found in the cytoplasm. The enzyme catalyses (S)-4-amino-5-oxopentanoate = 5-aminolevulinate. It participates in porphyrin-containing compound metabolism; protoporphyrin-IX biosynthesis; 5-aminolevulinate from L-glutamyl-tRNA(Glu): step 2/2. The protein is Glutamate-1-semialdehyde 2,1-aminomutase 2 of Staphylococcus aureus (strain bovine RF122 / ET3-1).